The following is a 171-amino-acid chain: Sec-independent protein translocase protein TatB (171 aa).

A helical transmembrane segment spans residues 1–21; the sequence is MFDIGFSELLLVFIIGLVVLG. The tract at residues 117–171 is disordered; the sequence is KDNETAHEGVTPAAAQTQASSPEQKPETTPEPVVKPAADAEPKTAAPSPSSSDKP. A compositionally biased stretch (polar residues) spans 130–139; it reads AAQTQASSPE.

Belongs to the TatB family. As to quaternary structure, the Tat system comprises two distinct complexes: a TatABC complex, containing multiple copies of TatA, TatB and TatC subunits, and a separate TatA complex, containing only TatA subunits. Substrates initially bind to the TatABC complex, which probably triggers association of the separate TatA complex to form the active translocon.

The protein resides in the cell inner membrane. Functionally, part of the twin-arginine translocation (Tat) system that transports large folded proteins containing a characteristic twin-arginine motif in their signal peptide across membranes. Together with TatC, TatB is part of a receptor directly interacting with Tat signal peptides. TatB may form an oligomeric binding site that transiently accommodates folded Tat precursor proteins before their translocation. The sequence is that of Sec-independent protein translocase protein TatB from Escherichia coli O6:K15:H31 (strain 536 / UPEC).